Here is a 285-residue protein sequence, read N- to C-terminus: MRWLLPLFRTVTLAVVRVRRGVCGLGMFYAVRRGRRTGVFLSWSECKAQVDRFPAARFKKFATEDEAWAFVRSSSSPDGSKGQESAHVQKLQVKTSKRPREPLGEEEEPPEPGAKHTRQDTEPAALVSKDAFSYMGESVVVYTDGCCSSNGRKRARAGIGVYWGPGHPLNVGIRLPGRQTNQRAEIHAACKAITQAKAQNISKLVLYTDSMFTINGITNWVQGWKKNGWRTSTGKDVINKEDFMELDELTQGMDIQWMHIPGHSGFVGNEEADRLAREGAKQSEG.

The segment at Arg72 to Glu122 is disordered. In terms of domain architecture, RNase H type-1 spans Met135–Lys281. Asp144, Glu185, Asp209, and Asp273 together coordinate Mg(2+).

It belongs to the RNase H family. In terms of assembly, monomer. The cofactor is Mg(2+).

The protein localises to the cytoplasm. The enzyme catalyses Endonucleolytic cleavage to 5'-phosphomonoester.. With respect to regulation, in the presence of magnesium, manganese is inhibitory. In terms of biological role, endonuclease that specifically degrades the RNA of RNA-DNA hybrids. Plays a role in RNA polymerase II (RNAp II) transcription termination by degrading R-loop RNA-DNA hybrid formation at G-rich pause sites located downstream of the poly(A) site and behind the elongating RNAp II. The polypeptide is Ribonuclease H1 (Rnaseh1) (Rattus norvegicus (Rat)).